Consider the following 87-residue polypeptide: Chromosomal protein MC1b (87 aa).

In terms of biological role, protects DNA against thermal denaturation and modulates transcription. This chain is Chromosomal protein MC1b, found in Methanothrix soehngenii (Methanosaeta concilii).